Reading from the N-terminus, the 442-residue chain is D-serine dehydratase 1 (442 aa).

Lys118 carries the N6-(pyridoxal phosphate)lysine modification.

Belongs to the serine/threonine dehydratase family. DsdA subfamily. Monomer. Requires pyridoxal 5'-phosphate as cofactor.

It catalyses the reaction D-serine = pyruvate + NH4(+). In Escherichia coli O6:K15:H31 (strain 536 / UPEC), this protein is D-serine dehydratase 1.